The primary structure comprises 156 residues: Regulatory protein RecX (156 aa).

It belongs to the RecX family.

It localises to the cytoplasm. Modulates RecA activity. The sequence is that of Regulatory protein RecX from Pseudomonas putida (strain ATCC 47054 / DSM 6125 / CFBP 8728 / NCIMB 11950 / KT2440).